Here is a 469-residue protein sequence, read N- to C-terminus: Ribulose bisphosphate carboxylase large chain (469 aa).

Position 8 is an N6,N6,N6-trimethyllysine (K8). The substrate site is built by N117 and T167. K169 serves as the catalytic Proton acceptor. Substrate is bound at residue K171. K195, D197, and E198 together coordinate Mg(2+). At K195 the chain carries N6-carboxylysine. The active-site Proton acceptor is the H288. Positions 289, 321, and 373 each coordinate substrate.

This sequence belongs to the RuBisCO large chain family. Type I subfamily. In terms of assembly, heterohexadecamer of 8 large chains and 8 small chains; disulfide-linked. The disulfide link is formed within the large subunit homodimers. Requires Mg(2+) as cofactor. The disulfide bond which can form in the large chain dimeric partners within the hexadecamer appears to be associated with oxidative stress and protein turnover.

Its subcellular location is the plastid. The protein localises to the chloroplast. The catalysed reaction is 2 (2R)-3-phosphoglycerate + 2 H(+) = D-ribulose 1,5-bisphosphate + CO2 + H2O. The enzyme catalyses D-ribulose 1,5-bisphosphate + O2 = 2-phosphoglycolate + (2R)-3-phosphoglycerate + 2 H(+). Functionally, ruBisCO catalyzes two reactions: the carboxylation of D-ribulose 1,5-bisphosphate, the primary event in carbon dioxide fixation, as well as the oxidative fragmentation of the pentose substrate in the photorespiration process. Both reactions occur simultaneously and in competition at the same active site. This chain is Ribulose bisphosphate carboxylase large chain, found in Akania bidwillii (Turnipwood).